A 375-amino-acid chain; its full sequence is Glycogen synthase kinase-3 homolog YGK3 (375 aa).

The 289-residue stretch at 41–329 (VREGKRIGHG…ARQLMAHEFF (289 aa)) folds into the Protein kinase domain. ATP contacts are provided by residues 47–55 (IGHGSFGTV) and lysine 74. Aspartate 173 functions as the Proton acceptor in the catalytic mechanism. Serine 211 is modified (phosphoserine).

The protein belongs to the protein kinase superfamily. Ser/Thr protein kinase family.

The catalysed reaction is L-seryl-[protein] + ATP = O-phospho-L-seryl-[protein] + ADP + H(+). It catalyses the reaction L-threonyl-[protein] + ATP = O-phospho-L-threonyl-[protein] + ADP + H(+). Functionally, required for heat stress-instigated phosphorylation of BCY1 which is involved in cell wall integrity signaling. Regulates activity of MSN2, a transcription factor that binds to the stress-response element (STRE). Probably promotes formation of a complex between MSN2 and DNA. Regulates the stability of ROG1. In Saccharomyces cerevisiae (strain ATCC 204508 / S288c) (Baker's yeast), this protein is Glycogen synthase kinase-3 homolog YGK3 (YGK3).